Here is a 346-residue protein sequence, read N- to C-terminus: Probable dolichyl-diphosphooligosaccharide--protein glycosyltransferase subunit 3B (346 aa).

The first 22 residues, 1 to 22, serve as a signal peptide directing secretion; the sequence is MALKSKLVSLLFLIATLSSTFA. Residues 23-189 lie on the Lumenal side of the membrane; that stretch reads ASFSDSDSDS…KVGPIQRPPL (167 aa). The N-linked (GlcNAc...) asparagine glycan is linked to N108. Residues 190–210 form a helical membrane-spanning segment; the sequence is LSKPQIGIIVALIVIATPFII. The Cytoplasmic segment spans residues 211–225; it reads KRVLKGETILHDTRL. The helical transmembrane segment at 226–246 threads the bilayer; it reads WLSGAIFIYFFSVAGTMHNII. The Lumenal portion of the chain corresponds to 247–277; it reads RKMPMFLQDRNDPNKLVFFYQGSGMQLGAEG. The helical transmembrane segment at 278-298 threads the bilayer; it reads FAVGFLYTVVGLLLAFVTNVL. Over 299 to 308 the chain is Cytoplasmic; sequence VRVKNITAQR. The chain crosses the membrane as a helical span at residues 309–329; the sequence is LIMLLALFISFWAVKKVVYLD. Residues 330–346 lie on the Lumenal side of the membrane; that stretch reads NWKTGYGIHPYWPSSWR.

It belongs to the OST3/OST6 family. In terms of assembly, component of the oligosaccharyltransferase (OST) complex.

It localises to the endoplasmic reticulum membrane. In terms of biological role, subunit of the oligosaccharyl transferase (OST) complex that catalyzes the initial transfer of a defined glycan (Glc(3)Man(9)GlcNAc(2) in eukaryotes) from the lipid carrier dolichol-pyrophosphate to an asparagine residue within an Asn-X-Ser/Thr consensus motif in nascent polypeptide chains, the first step in protein N-glycosylation. N-glycosylation occurs cotranslationally and the complex associates with the Sec61 complex at the channel-forming translocon complex that mediates protein translocation across the endoplasmic reticulum (ER). All subunits are required for a maximal enzyme activity. The sequence is that of Probable dolichyl-diphosphooligosaccharide--protein glycosyltransferase subunit 3B (OST3B) from Arabidopsis thaliana (Mouse-ear cress).